A 273-amino-acid polypeptide reads, in one-letter code: Phosphate import ATP-binding protein PstB (273 aa).

Residues 27-268 (VTVRDLNFYY…PSDRRTQDYI (242 aa)) enclose the ABC transporter domain. ATP is bound at residue 59 to 66 (GPSGCGKS).

The protein belongs to the ABC transporter superfamily. Phosphate importer (TC 3.A.1.7) family. The complex is composed of two ATP-binding proteins (PstB), two transmembrane proteins (PstC and PstA) and a solute-binding protein (PstS).

The protein localises to the cell inner membrane. The catalysed reaction is phosphate(out) + ATP + H2O = ADP + 2 phosphate(in) + H(+). Part of the ABC transporter complex PstSACB involved in phosphate import. Responsible for energy coupling to the transport system. The polypeptide is Phosphate import ATP-binding protein PstB (Rhodopseudomonas palustris (strain ATCC BAA-98 / CGA009)).